The primary structure comprises 178 residues: MIEDAIIVSTLASAALYLIYKTTKKQKVNNQQFIIERWTPETVQESPQSRYIIGNLKQRLQMLFPPPHMTRKKFTGILSMLNNRNIMAEIKLQEGPKSFTINKKQIFLCIKDKKSGDANYYDYNSLIFVTLHEIAHVLCDELGHTQKFQHIFKELLDHASSLGLYDETKPFVKNYCPS.

Belongs to the IIV-6 136R family.

This is an uncharacterized protein from Invertebrate iridescent virus 6 (IIV-6).